The following is a 295-amino-acid chain: Protein shisa-2 homolog (295 aa).

The N-terminal stretch at 1-33 (MWGARRSSVSSSWNAASLLQLLLAALLAAGARA) is a signal peptide. The Extracellular portion of the chain corresponds to 34–110 (SGEYCHGWLD…RADKDGPDGS (77 aa)). Positions 87–108 (GCDNDRQQGAGEPGRADKDGPD) are disordered. A helical transmembrane segment spans residues 111-131 (AVPIYVPFLIVGSVFVAFIIL). Residues 132–295 (GSLVAACCCR…EQKMYPAVTV (164 aa)) lie on the Cytoplasmic side of the membrane. The disordered stretch occupies residues 168 to 205 (PSASTSRGSSSRQSSTAASSSSSANSGARAPPTRSQTN). The segment covering 169-197 (SASTSRGSSSRQSSTAASSSSSANSGARA) has biased composition (low complexity).

It belongs to the shisa family.

It is found in the endoplasmic reticulum membrane. In terms of biological role, plays an essential role in the maturation of presomitic mesoderm cells by individual attenuation of both FGF and WNT signaling. In Homo sapiens (Human), this protein is Protein shisa-2 homolog (SHISA2).